The sequence spans 410 residues: Serine proteinase inhibitor A3K (410 aa).

The first 24 residues, 1 to 24, serve as a signal peptide directing secretion; it reads MPSAISRGLLLLAGLCYLVFGIMA. N-linked (GlcNAc...) asparagine glycosylation is found at Asn-62, Asn-99, Asn-162, Asn-229, and Asn-263. The RCL stretch occupies residues 360-381; the sequence is GTEAAAATVLEATRTARPPRLS.

Belongs to the serpin family.

It is found in the secreted. Its subcellular location is the extracellular space. Its function is as follows. Contrapsin inhibits trypsin-like proteases. The protein is Serine proteinase inhibitor A3K (SERPINA3K) of Cavia porcellus (Guinea pig).